Reading from the N-terminus, the 162-residue chain is 6,7-dimethyl-8-ribityllumazine synthase (162 aa).

Residues Tyr27, 58–60, and 87–89 each bind 5-amino-6-(D-ribitylamino)uracil; these read ALE and CVI. 92–93 is a binding site for (2S)-2-hydroxy-3-oxobutyl phosphate; that stretch reads ET. His95 acts as the Proton donor in catalysis. 5-amino-6-(D-ribitylamino)uracil is bound at residue Asn120. (2S)-2-hydroxy-3-oxobutyl phosphate is bound at residue Arg134.

Belongs to the DMRL synthase family.

It catalyses the reaction (2S)-2-hydroxy-3-oxobutyl phosphate + 5-amino-6-(D-ribitylamino)uracil = 6,7-dimethyl-8-(1-D-ribityl)lumazine + phosphate + 2 H2O + H(+). The protein operates within cofactor biosynthesis; riboflavin biosynthesis; riboflavin from 2-hydroxy-3-oxobutyl phosphate and 5-amino-6-(D-ribitylamino)uracil: step 1/2. In terms of biological role, catalyzes the formation of 6,7-dimethyl-8-ribityllumazine by condensation of 5-amino-6-(D-ribitylamino)uracil with 3,4-dihydroxy-2-butanone 4-phosphate. This is the penultimate step in the biosynthesis of riboflavin. This Azorhizobium caulinodans (strain ATCC 43989 / DSM 5975 / JCM 20966 / LMG 6465 / NBRC 14845 / NCIMB 13405 / ORS 571) protein is 6,7-dimethyl-8-ribityllumazine synthase.